The chain runs to 1823 residues: MDHITMEEKINKKTKHIFSNNYDNILSDKQVQCIYKEFFNNNKDNNNNKRFNENGNQINQIDFNSNKEEEKEEKEEKEKEEDEDNITILDDVYYSLEYDFEDYIKYSKILTEKIEKERITQLFEQEKQNRLIRYHQRIQQQKVIKEQLNVNMELLEKRKLLETELSLKSNQLNQCQTQLQQFQSTMTLLQSQHQQTINKLKQTQSEQLQKRRNQQHQNLLKKQKIQKEKEEREQKEKEQKEKEQKEKEEQQQQLFLLQQQQQQEEESKTTNKKKRNSRTTSINRVFRSLLTDVKVPAKKFNGLKSEAQEEMYDQLDTVLNQLKDYSDHSFPFLTKVRPSEAPNYYEIIKKPMDLSLMTKKLKKLEYQSKFEFQLDLNLIFTNCRIYNTDPSGKVYVEHANKMEKKSKDLMKNVKDLDFSMDILKDIVDENKNNNNSNNSVDNNNSLKKGRTSTPNKKQKTSNSTTTTTTTTTTTTATTPNLLNTPLSSPPYTPCSPSTISTVSSTPTTPQSADCPLSPFQQQQQQQTQAQQQPTSNSPRNTTTTTTTITSPISPRETNKDVIMEEEEESSSSSLSSSSLALNSQNENGVNKSIEDSTGVKMESEESTNVKKEENQSGDCENQTTTTTTKEEGEEQQEQEDEEQQQQQQQQEEQTLEIENEEDIINNFNSEIESLNNDFSEKTLQLSIQIKEISEKTEHFKINNSKIQQNLDELPLADKLNLDINNAKELVDDNIELDDSEIIIPPYLNNNNNNCNNNNNNNDNNNNNNIDNDNDNNNNNSLENSFEIEKSKKINKFKELTKENRVRKLKYFLDQQSLPFNKREAFIRTPYFMNTFYNLDLQQQNQKQQQIFNQEINDNDDDNNNNNNNNNNNNNNNNNNNNNNNKPKVMSAIQKMDQDFMDLKVGFFPELTHLSNSIPIITPNYPITCKNSSIDNSVTTPSKSLLRLLNSSKSNNNSNNKKEKQCNYNREGEDDEGRGEEQKEKEEEKEDEDFPNIITNDIAYILLSKSIAKSIESESCLHGTTQETMLIFTDIVSSFIGKIGKLFNKYYSNNGLPNNKSTTTQTTPTTQLQPPPPPPSLSLPPSLLLNSIVTDIFGDSLGILLLKDYMIKKSKNQQIYDDPLFELEVEFENDHLQSDNILQNNNGDIDINESMEIDILGEDDIIDIDDTGLFGHYPRYIEEPAEITLFIDPKPIQKPTTNTTTNNNNNNNNNNNNNNNNNNNNNNNNNNNNNNNNNNNNNNNNNNSNSNNNNNNNNSNSNNNNNNNNNNNNNNNNNNNNNNNNNNNNNNNNNNSINNNNHNNNNNNNNNINNNNNNNNNNNNNNNNNNNINNNNNNNINNNNNNINNYNNNYNNNNNNNNNNNNNNNNNNNNNNNNNYPKPIQASTQTGNLGIQQQLQQQQLHQLQQQQQLQQQYQIQQQQLHLQQQQQQQQQLKLQQIQFQQMQQQQQQQQLQQQTRQPSQPQTPQMQSQPQTPQILSQPQQQLQQLQQQQLQQQQQLQQQQLQQQQLFQQQQQQQQQQQQQQQQQQQQQQQQQQLLHPQQMQIQQNLQQPLQQIQQQQQIQQQQQQQLQQQQQQQQQQQQQQQQQQQQQQQQQQQQQHHQQLQQLQPQQQQQLQQLQPQQLQQLQQLQQLQQLQQLQQLQPQQLQQLQQLQQLQPQQLQQPQQLQPQQLQQQQLQQQQQPQQQQQQPQQQPQQQPQQQQQPQYQTTFQSIASPKEKDKEREKEKEREREKEKDRKFKKVKKTESKKESKKSLNDSSNSDINTSVEQHSPLSPQPISSSKPTPPPVSSKQPQTTQSNTTTTQDSIPPIEQKKKRGRPQKKQ.

Disordered stretches follow at residues 44 to 83 (DNNNNKRFNENGNQINQIDFNSNKEEEKEEKEEKEKEEDE) and 200 to 281 (LKQT…RTTS). Residues 65 to 77 (SNKEEEKEEKEEK) are compositionally biased toward basic and acidic residues. Positions 210–224 (KRRNQQHQNLLKKQK) are enriched in basic residues. The span at 225–250 (IQKEKEEREQKEKEQKEKEQKEKEEQ) shows a compositional bias: basic and acidic residues. Residues 251–262 (QQQLFLLQQQQQ) show a composition bias toward low complexity. Residues 306–413 (EAQEEMYDQL…KKSKDLMKNV (108 aa)) form the Bromo domain. Disordered stretches follow at residues 429–654 (ENKN…EEQT), 753–781 (NCNNNNNNNDNNNNNNIDNDNDNNNNNSL), 855–886 (INDNDDDNNNNNNNNNNNNNNNNNNNNNNNKP), 949–993 (NSSK…DEDF), 1055–1079 (LPNNKSTTTQTTPTTQLQPPPPPPS), 1190–1386 (IDPK…IQAS), 1453–1477 (QLQQQTRQPSQPQTPQMQSQPQTPQ), and 1679–1823 (QQQQ…QKKQ). 4 stretches are compositionally biased toward low complexity: residues 432-486 (NNNN…NTPL), 494-511 (CSPSTISTVSSTPTTPQS), 520-555 (QQQQQQQTQAQQQPTSNSPRNTTTTTTTITSPISPR), and 570-579 (SSSSLSSSSL). A compositionally biased stretch (polar residues) spans 580–590 (ALNSQNENGVN). The segment covering 601-614 (MESEESTNVKKEEN) has biased composition (basic and acidic residues). Residues 631–643 (EGEEQQEQEDEEQ) are compositionally biased toward acidic residues. Composition is skewed to low complexity over residues 753-779 (NCNNNNNNNDNNNNNNIDNDNDNNNNN), 863-884 (NNNNNNNNNNNNNNNNNNNNNN), 949-958 (NSSKSNNNSN), 1055-1071 (LPNNKSTTTQTTPTTQL), and 1205-1378 (NNNN…NNNN). Over residues 1679 to 1705 (QQQQPQQQQQQPQQQPQQQPQQQQQPQ) the composition is skewed to low complexity. Basic and acidic residues-rich tracts occupy residues 1716–1737 (PKEKDKEREKEKEREREKEKDR) and 1744–1755 (KTESKKESKKSL). 2 stretches are compositionally biased toward low complexity: residues 1756–1767 (NDSSNSDINTSV) and 1789–1806 (SSKQPQTTQSNTTTTQDS). Residues 1813–1823 (KKKRGRPQKKQ) are compositionally biased toward basic residues.

The chain is Bromodomain-containing protein DDB_G0280777 from Dictyostelium discoideum (Social amoeba).